Consider the following 105-residue polypeptide: Large ribosomal subunit protein uL24 (105 aa).

It belongs to the universal ribosomal protein uL24 family. Part of the 50S ribosomal subunit.

In terms of biological role, one of two assembly initiator proteins, it binds directly to the 5'-end of the 23S rRNA, where it nucleates assembly of the 50S subunit. Functionally, one of the proteins that surrounds the polypeptide exit tunnel on the outside of the subunit. This Rhizorhabdus wittichii (strain DSM 6014 / CCUG 31198 / JCM 15750 / NBRC 105917 / EY 4224 / RW1) (Sphingomonas wittichii) protein is Large ribosomal subunit protein uL24.